The sequence spans 232 residues: MTVQKMTAQEIIAFIGNAEKKTSVKVTFEGELSAPVPESVLKLGNVLFGDWKAIEPLLVDLKENVDFIVEQDGRNSAVPLLDKRRINARIEPGAIIRDQVVIGDNAVIMMGAIINIGAEIGPGTMIDMGAILGGRATVGKNSHIGAGAVLAGVIEPASAEPVRIGDNVLVGANAVVIEGVQVGNGSVVAAGAIVTEDVPENVVVAGVPARIIKEIDSQTQQKTALEDALRLI.

Belongs to the transferase hexapeptide repeat family. DapH subfamily.

It catalyses the reaction (S)-2,3,4,5-tetrahydrodipicolinate + acetyl-CoA + H2O = L-2-acetamido-6-oxoheptanedioate + CoA. Its pathway is amino-acid biosynthesis; L-lysine biosynthesis via DAP pathway; LL-2,6-diaminopimelate from (S)-tetrahydrodipicolinate (acetylase route): step 1/3. In terms of biological role, catalyzes the transfer of an acetyl group from acetyl-CoA to tetrahydrodipicolinate. This is 2,3,4,5-tetrahydropyridine-2,6-dicarboxylate N-acetyltransferase from Streptococcus uberis (strain ATCC BAA-854 / 0140J).